Here is a 427-residue protein sequence, read N- to C-terminus: Enolase (427 aa).

Gln163 is a (2R)-2-phosphoglycerate binding site. Glu205 functions as the Proton donor in the catalytic mechanism. 3 residues coordinate Mg(2+): Asp242, Glu285, and Asp312. (2R)-2-phosphoglycerate contacts are provided by Lys337, Arg366, Ser367, and Lys388. Lys337 serves as the catalytic Proton acceptor.

The protein belongs to the enolase family. Mg(2+) is required as a cofactor.

It is found in the cytoplasm. The protein localises to the secreted. The protein resides in the cell surface. The enzyme catalyses (2R)-2-phosphoglycerate = phosphoenolpyruvate + H2O. It participates in carbohydrate degradation; glycolysis; pyruvate from D-glyceraldehyde 3-phosphate: step 4/5. Functionally, catalyzes the reversible conversion of 2-phosphoglycerate (2-PG) into phosphoenolpyruvate (PEP). It is essential for the degradation of carbohydrates via glycolysis. This is Enolase from Burkholderia lata (strain ATCC 17760 / DSM 23089 / LMG 22485 / NCIMB 9086 / R18194 / 383).